The following is a 320-amino-acid chain: Ribosome production factor 2 homolog (320 aa).

A Brix domain is found at 30-234; it reads RTMLFLDGRK…IRRTKIASED (205 aa). The segment at 268–320 is disordered; it reads LGKQQTGSIQTRRVKALRKTPEEKKENRQRKKVALKAAAAEALASQGNNPFSS. Low complexity predominate over residues 302–311; the sequence is LKAAAAEALA.

The protein belongs to the RPF2 family.

It localises to the nucleus. The protein localises to the nucleolus. Functionally, required for normal assembly of the mitotic spindle. May be involved in both centrosome-dependent and centrosome-independent spindle assembly programs. The polypeptide is Ribosome production factor 2 homolog (Drosophila melanogaster (Fruit fly)).